A 1002-amino-acid polypeptide reads, in one-letter code: Lon protease homolog, mitochondrial (1002 aa).

One can recognise a Lon N-terminal domain in the interval 102-313; sequence VIALPLPHRP…LTLELVKKEM (212 aa). 468–475 contacts ATP; the sequence is GPPGVGKT. The 185-residue stretch at 811–995 folds into the Lon proteolytic domain; sequence QTPVGVVMGL…NEIFDIAFQS (185 aa). Active-site residues include serine 901 and lysine 944.

Belongs to the peptidase S16 family. In terms of assembly, homohexamer or homoheptamer. Organized in a ring with a central cavity.

Its subcellular location is the mitochondrion matrix. The catalysed reaction is Hydrolysis of proteins in presence of ATP.. In terms of biological role, ATP-dependent serine protease that mediates the selective degradation of misfolded, unassembled or oxidatively damaged polypeptides as well as certain short-lived regulatory proteins in the mitochondrial matrix. May also have a chaperone function in the assembly of inner membrane protein complexes. Participates in the regulation of mitochondrial gene expression and in the maintenance of the integrity of the mitochondrial genome. Binds to mitochondrial DNA in a site-specific manner. The sequence is that of Lon protease homolog, mitochondrial from Oryza sativa subsp. japonica (Rice).